The following is a 278-amino-acid chain: Serine protease 57 (278 aa).

An N-terminal signal peptide occupies residues 1 to 31 (MVPGTGGGRDCLTLVVATALTQLLWLPGCCG). Positions 34–263 (IVGGHEVKPH…FVSWIWDVVR (230 aa)) constitute a Peptidase S1 domain. A disulfide bridge connects residues cysteine 59 and cysteine 75. Residues histidine 74 and aspartate 122 each act as charge relay system in the active site. N-linked (GlcNAc...) asparagine glycosylation is present at asparagine 129. 3 cysteine pairs are disulfide-bonded: cysteine 157–cysteine 224, cysteine 188–cysteine 202, and cysteine 214–cysteine 239. The active-site Charge relay system is the serine 218.

It belongs to the peptidase S1 family. Post-translationally, after cleavage of the signal peptide, the N-terminus is probably further processed by CTSC. Processing by CTSC is probably required for accumulation in cytoplasmic granules; in the absence of CTSC the protein does not accumulate. N-glycosylated.

It is found in the cytoplasmic granule lumen. The protein localises to the secreted. Functionally, serine protease that cleaves preferentially after Arg residues. Can also cleave after citrulline (deimidated arginine) and methylarginine residues. In Rattus norvegicus (Rat), this protein is Serine protease 57 (Prss57).